A 334-amino-acid polypeptide reads, in one-letter code: Ficolin-1 (334 aa).

An N-terminal signal peptide occupies residues 1-17 (MQWPTLWAFSGLLCLCP). Residues 47 to 117 (SCPGFPGPPG…SLGEKELGDT (71 aa)) form a disordered region. The Collagen-like domain maps to 50 to 88 (GFPGPPGPKGEPGSPAGRGERGFQGSPGKMGPAGSKGEP). The 218-residue stretch at 117–334 (TLCQRGPRSC…KVAEMKIRAS (218 aa)) folds into the Fibrinogen C-terminal domain. 2 disulfides stabilise this stretch: cysteine 119-cysteine 147 and cysteine 126-cysteine 154. The a domain; contributes to trimerization stretch occupies residues 123-162 (PRSCKDLLTRGIFLTGWYTIHLPDCRPLTVLCDMDVDGGG). Positions 163-251 (WTVFQRRVDG…LTLGQFLEGT (89 aa)) are b domain; contributes to trimerization. Residue asparagine 261 is glycosylated (N-linked (GlcNAc...) asparagine). Ca(2+) is bound by residues aspartate 270 and aspartate 272. The cysteines at positions 278 and 291 are disulfide-linked. Position 290 to 292 (290 to 292 (NCH)) interacts with a carbohydrate. The p domain stretch occupies residues 325 to 334 (KVAEMKIRAS).

It belongs to the ficolin lectin family. Homotrimer. Interacts with elastin/ELN. Interacts (via Fibrinogen C-terminal domain) with FFAR2. Interacts with CRP; may regulate monocyte activation by FCN1. Highly expressed in liver and spleen.

The protein localises to the secreted. It is found in the cell membrane. Its function is as follows. Extracellular lectin functioning as a pattern-recognition receptor in innate immunity. Binds the sugar moieties of pathogen-associated molecular patterns (PAMPs) displayed on microbes and activates the lectin pathway of the complement system. May also activate monocytes through a G protein-coupled receptor, FFAR2, inducing the secretion of interleukin-8/IL-8. Binds preferentially to 9-O-acetylated 2-6-linked sialic acid derivatives and to various glycans containing sialic acid engaged in a 2-3 linkage. This chain is Ficolin-1 (Fcn1), found in Mus musculus (Mouse).